A 444-amino-acid polypeptide reads, in one-letter code: Transcriptional regulatory protein GlrR (444 aa).

The 115-residue stretch at histidine 7 to leucine 121 folds into the Response regulatory domain. Position 56 is a 4-aspartylphosphate (aspartate 56). In terms of domain architecture, Sigma-54 factor interaction spans isoleucine 136 to leucine 366. Residues glycine 164–glutamate 171 and alanine 227–glutamate 236 contribute to the ATP site. Residues valine 414–serine 433 constitute a DNA-binding region (H-T-H motif).

Post-translationally, phosphorylated by GlrK.

It is found in the cytoplasm. In terms of biological role, member of the two-component regulatory system GlrR/GlrK that up-regulates transcription of the glmY sRNA when cells enter the stationary growth phase. Regulates glmY transcription by binding to three conserved sites in the purL-glmY intergenic region. The polypeptide is Transcriptional regulatory protein GlrR (glrR) (Escherichia coli (strain K12)).